We begin with the raw amino-acid sequence, 103 residues long: MSNIDLKPKTKAKAKIKVERPKLHKVILVNDDYTPREFVVSVLKGEFRMTEDQATKVMLTAHQRGVCVVGVFTKDVAETKATRATDAGRAKGYPLLFTTEPEE.

It belongs to the ClpS family. In terms of assembly, binds to the N-terminal domain of the chaperone ClpA.

In terms of biological role, involved in the modulation of the specificity of the ClpAP-mediated ATP-dependent protein degradation. The protein is ATP-dependent Clp protease adapter protein ClpS 1 of Rhodopseudomonas palustris (strain ATCC BAA-98 / CGA009).